Consider the following 348-residue polypeptide: Holliday junction branch migration complex subunit RuvB (348 aa).

Residues 1–10 (MAIVSSSSGR) are compositionally biased toward low complexity. The segment at 1–37 (MAIVSSSSGRKPPRRPEALMDPQQAPEEVVSRPEDKL) is disordered. A large ATPase domain (RuvB-L) region spans residues 13 to 198 (PRRPEALMDP…FGLIQRLEFY (186 aa)). ATP-binding residues include L37, R38, G79, K82, T83, T84, R188, Y198, and R235. Residue T83 participates in Mg(2+) binding. The segment at 199-271 (GQGDLEAIVE…LVGEALSLHR (73 aa)) is small ATPAse domain (RuvB-S). The interval 274 to 348 (HRGLDASDRR…AARSHLAEAA (75 aa)) is head domain (RuvB-H). DNA is bound by residues R329 and R334.

Belongs to the RuvB family. In terms of assembly, homohexamer. Forms an RuvA(8)-RuvB(12)-Holliday junction (HJ) complex. HJ DNA is sandwiched between 2 RuvA tetramers; dsDNA enters through RuvA and exits via RuvB. An RuvB hexamer assembles on each DNA strand where it exits the tetramer. Each RuvB hexamer is contacted by two RuvA subunits (via domain III) on 2 adjacent RuvB subunits; this complex drives branch migration. In the full resolvosome a probable DNA-RuvA(4)-RuvB(12)-RuvC(2) complex forms which resolves the HJ.

Its subcellular location is the cytoplasm. It carries out the reaction ATP + H2O = ADP + phosphate + H(+). Functionally, the RuvA-RuvB-RuvC complex processes Holliday junction (HJ) DNA during genetic recombination and DNA repair, while the RuvA-RuvB complex plays an important role in the rescue of blocked DNA replication forks via replication fork reversal (RFR). RuvA specifically binds to HJ cruciform DNA, conferring on it an open structure. The RuvB hexamer acts as an ATP-dependent pump, pulling dsDNA into and through the RuvAB complex. RuvB forms 2 homohexamers on either side of HJ DNA bound by 1 or 2 RuvA tetramers; 4 subunits per hexamer contact DNA at a time. Coordinated motions by a converter formed by DNA-disengaged RuvB subunits stimulates ATP hydrolysis and nucleotide exchange. Immobilization of the converter enables RuvB to convert the ATP-contained energy into a lever motion, pulling 2 nucleotides of DNA out of the RuvA tetramer per ATP hydrolyzed, thus driving DNA branch migration. The RuvB motors rotate together with the DNA substrate, which together with the progressing nucleotide cycle form the mechanistic basis for DNA recombination by continuous HJ branch migration. Branch migration allows RuvC to scan DNA until it finds its consensus sequence, where it cleaves and resolves cruciform DNA. The protein is Holliday junction branch migration complex subunit RuvB of Synechococcus sp. (strain CC9605).